The primary structure comprises 101 residues: MMLEHVLVLGAYLFSIGIYGLITSRNMVRALMCLELILNAVNINLVTFSDFFDSRQLKGDILSIFVIAIAAAEAAIGLAIVSSIYRNRKSTRINQSNLLNK.

The next 3 membrane-spanning stretches (helical) occupy residues Met-2 to Ile-22, Met-32 to Phe-52, and Ile-61 to Val-81.

The protein belongs to the complex I subunit 4L family. As to quaternary structure, NDH is composed of at least 16 different subunits, 5 of which are encoded in the nucleus.

The protein resides in the plastid. The protein localises to the chloroplast thylakoid membrane. It catalyses the reaction a plastoquinone + NADH + (n+1) H(+)(in) = a plastoquinol + NAD(+) + n H(+)(out). The catalysed reaction is a plastoquinone + NADPH + (n+1) H(+)(in) = a plastoquinol + NADP(+) + n H(+)(out). Functionally, NDH shuttles electrons from NAD(P)H:plastoquinone, via FMN and iron-sulfur (Fe-S) centers, to quinones in the photosynthetic chain and possibly in a chloroplast respiratory chain. The immediate electron acceptor for the enzyme in this species is believed to be plastoquinone. Couples the redox reaction to proton translocation, and thus conserves the redox energy in a proton gradient. The sequence is that of NAD(P)H-quinone oxidoreductase subunit 4L, chloroplastic from Buxus microphylla (Littleleaf boxwood).